We begin with the raw amino-acid sequence, 90 residues long: Putative defensin-like protein 168 (90 aa).

A signal peptide spans 1–27 (MKYFTLFMISYIFISIFVFSHIHDVEA). Cystine bridges form between Cys32-Cys90, Cys43-Cys66, Cys51-Cys84, and Cys64-Cys86.

This sequence belongs to the DEFL family.

Its subcellular location is the secreted. The protein is Putative defensin-like protein 168 of Arabidopsis thaliana (Mouse-ear cress).